Consider the following 1207-residue polypeptide: DNA-directed RNA polymerase subunit beta' (1207 aa).

Zn(2+) contacts are provided by Cys60, Cys62, Cys75, and Cys78. Positions 450, 452, and 454 each coordinate Mg(2+). Zn(2+) is bound by residues Cys819, Cys893, Cys900, and Cys903.

Belongs to the RNA polymerase beta' chain family. In terms of assembly, the RNAP catalytic core consists of 2 alpha, 1 beta, 1 beta' and 1 omega subunit. When a sigma factor is associated with the core the holoenzyme is formed, which can initiate transcription. Mg(2+) is required as a cofactor. It depends on Zn(2+) as a cofactor.

It carries out the reaction RNA(n) + a ribonucleoside 5'-triphosphate = RNA(n+1) + diphosphate. Functionally, DNA-dependent RNA polymerase catalyzes the transcription of DNA into RNA using the four ribonucleoside triphosphates as substrates. The sequence is that of DNA-directed RNA polymerase subunit beta' from Streptococcus pyogenes serotype M3 (strain SSI-1).